The following is a 466-amino-acid chain: Cysteine--tRNA ligase (466 aa).

Cysteine 29 contacts Zn(2+). Residues proline 31–asparagine 41 carry the 'HIGH' region motif. Zn(2+)-binding residues include cysteine 210, histidine 235, and glutamate 239. The 'KMSKS' region motif lies at lysine 267 to serine 271. Position 270 (lysine 270) interacts with ATP.

This sequence belongs to the class-I aminoacyl-tRNA synthetase family. In terms of assembly, monomer. Requires Zn(2+) as cofactor.

The protein localises to the cytoplasm. The enzyme catalyses tRNA(Cys) + L-cysteine + ATP = L-cysteinyl-tRNA(Cys) + AMP + diphosphate. This Solibacter usitatus (strain Ellin6076) protein is Cysteine--tRNA ligase.